We begin with the raw amino-acid sequence, 156 residues long: Small ribosomal subunit protein uS7 (156 aa).

This sequence belongs to the universal ribosomal protein uS7 family. As to quaternary structure, part of the 30S ribosomal subunit. Contacts proteins S9 and S11.

Functionally, one of the primary rRNA binding proteins, it binds directly to 16S rRNA where it nucleates assembly of the head domain of the 30S subunit. Is located at the subunit interface close to the decoding center, probably blocks exit of the E-site tRNA. This Streptococcus pyogenes serotype M3 (strain ATCC BAA-595 / MGAS315) protein is Small ribosomal subunit protein uS7.